A 620-amino-acid polypeptide reads, in one-letter code: Protein regulator of cytokinesis 1 (620 aa).

Residues 1-303 (MRRSEVLAEE…IEAIRVELVQ (303 aa)) form a required for the interaction with KIF4A region. The segment at 1–341 (MRRSEVLAEE…QLHDAEIVRL (341 aa)) is dimerization. Coiled-coil stretches lie at residues 96 to 133 (ILQLEKDLRTQVELMRKQKKERKQELKLLQEQDQELCE), 211 to 304 (SLEN…LVQY), and 383 to 463 (GNLL…TEML). Residues 342-466 (KNYYEVHKEL…QTETEMLYGS (125 aa)) form a spectrin-fold region. Over residues 446–459 (AKQERQLKNKKQTE) the composition is skewed to basic and acidic residues. Positions 446–488 (AKQERQLKNKKQTETEMLYGSAPRTPSKRRGLAPNTPGKARKL) are disordered. The tract at residues 467–620 (APRTPSKRRG…GILNSTNIQS (154 aa)) is unstructured, Arg/Lys rich. Phosphothreonine; by CDK1 occurs at positions 470 and 481. 3 positions are modified to phosphoserine: serine 513, arginine 541, and serine 571. The interval 517–545 (RLPPSGSKPVAASTCSGKKTPRTGRHGAN) is disordered. At threonine 578 the chain carries Phosphothreonine. Residues 600-620 (LSKASKSDATSGILNSTNIQS) form a disordered region. Polar residues predominate over residues 606 to 620 (SDATSGILNSTNIQS). Threonine 616 is subject to Phosphothreonine; by PLK1.

Belongs to the MAP65/ASE1 family. In terms of assembly, homodimer. Interacts with the C-terminal Rho-GAP domain and the basic region of RACGAP1. The interaction with RACGAP1 inhibits its GAP activity towards CDC42 in vitro, which may be required for maintaining normal spindle morphology. Interacts (via N-terminus) with the C-terminus of CENPE (via C-terminus); the interaction occurs during late mitosis. Interacts (via N-terminus) with KIF4A (via C-terminus); the interaction is required for the progression of mitosis. Interacts (via N-terminus) with KIF23 (via C-terminus); the interaction occurs during late mitosis. Interacts with KIF14 and KIF20A. Interacts with PLK1. Interacts with KIF20B. Interacts with CCDC66. In terms of processing, phosphorylation by CDK1 in early mitosis holds PRC1 in an inactive monomeric state, during the metaphase to anaphase transition, PRC1 is dephosphorylated, promoting interaction with KIF4A, which then translocates PRC1 along mitotic spindles to the plus ends of antiparallel interdigitating microtubules. Dephosphorylation also promotes MT-bundling activity by allowing dimerization. Phosphorylation by CDK1 prevents PLK1-binding: upon degradation of CDK1 at anaphase and dephosphorylation, it is then phosphorylated by PLK1, leading to cytokinesis. In terms of tissue distribution, overexpressed in bladder cancer cells.

It localises to the nucleus. Its subcellular location is the cytoplasm. The protein localises to the cytoskeleton. It is found in the spindle pole. The protein resides in the midbody. It localises to the chromosome. Functionally, key regulator of cytokinesis that cross-links antiparrallel microtubules at an average distance of 35 nM. Essential for controlling the spatiotemporal formation of the midzone and successful cytokinesis. Required for KIF14 localization to the central spindle and midbody. Required to recruit PLK1 to the spindle. Stimulates PLK1 phosphorylation of RACGAP1 to allow recruitment of ECT2 to the central spindle. Acts as an oncogene for promoting bladder cancer cells proliferation, apoptosis inhibition and carcinogenic progression. This is Protein regulator of cytokinesis 1 from Homo sapiens (Human).